The chain runs to 1453 residues: Clustered mitochondria protein homolog (1453 aa).

Residues 78–101 (LSENGQENSPHNSDSGHETSSPDS) show a composition bias toward polar residues. The interval 78-110 (LSENGQENSPHNSDSGHETSSPDSPLTPIEEGA) is disordered. The Clu domain maps to 439–690 (EDGIRAEDCT…RTFPPDVNYL (252 aa)). Residues 979 to 1015 (PLTPSNEEVSMPINSVKKSRSSKRRKQISSGGKENDD) are disordered. Over residues 995-1005 (KKSRSSKRRKQ) the composition is skewed to basic residues. TPR repeat units follow at residues 1235-1268 (AEIDGNIGVILYAVQEFDDALKFLQNALKLHQIY) and 1277-1310 (ALIYHLLARTYSCRGDFRTALQMEKETFTIYSKT).

Belongs to the CLU family.

It is found in the cytoplasm. Functionally, mRNA-binding protein involved in proper cytoplasmic distribution of mitochondria. In Brugia malayi (Filarial nematode worm), this protein is Clustered mitochondria protein homolog.